A 122-amino-acid chain; its full sequence is Large ribosomal subunit protein uL14 (122 aa).

It belongs to the universal ribosomal protein uL14 family. As to quaternary structure, part of the 50S ribosomal subunit. Forms a cluster with proteins L3 and L19. In the 70S ribosome, L14 and L19 interact and together make contacts with the 16S rRNA in bridges B5 and B8.

Its function is as follows. Binds to 23S rRNA. Forms part of two intersubunit bridges in the 70S ribosome. This chain is Large ribosomal subunit protein uL14, found in Geotalea daltonii (strain DSM 22248 / JCM 15807 / FRC-32) (Geobacter daltonii).